A 134-amino-acid polypeptide reads, in one-letter code: Snaclec alboaggregin-A subunit alpha' (134 aa).

The C-type lectin domain occupies D1–Q134. 3 disulfides stabilise this stretch: C4–C15, C32–C129, and C104–C121.

Belongs to the snaclec family. In terms of assembly, heterotetramer of the subunits alpha, alpha', beta and beta'; disulfide-linked. Expressed by the venom gland.

Its subcellular location is the secreted. Its function is as follows. Potent platelet activator that aggregates platelets via both GPIbalpha (GP1BA) and GPVI (GP6). Induces a tyrosine phosphorylation profile in platelets that resembles this produced by collagen, involving the time dependent tyrosine phosphorylation of Fc receptor gamma chain (FCGR1A), phospholipase Cgamma2 (PLCG2), and LAT. The protein is Snaclec alboaggregin-A subunit alpha' of Trimeresurus albolabris (White-lipped pit viper).